The sequence spans 361 residues: Phosphoserine aminotransferase (361 aa).

Residue Arg-42 coordinates L-glutamate. Pyridoxal 5'-phosphate-binding positions include 76–77, Trp-102, Thr-152, Asp-172, and Gln-195; that span reads AT. Residue Lys-196 is modified to N6-(pyridoxal phosphate)lysine. A pyridoxal 5'-phosphate-binding site is contributed by 237-238; sequence NT.

Belongs to the class-V pyridoxal-phosphate-dependent aminotransferase family. SerC subfamily. In terms of assembly, homodimer. Pyridoxal 5'-phosphate serves as cofactor.

It localises to the cytoplasm. The enzyme catalyses O-phospho-L-serine + 2-oxoglutarate = 3-phosphooxypyruvate + L-glutamate. It catalyses the reaction 4-(phosphooxy)-L-threonine + 2-oxoglutarate = (R)-3-hydroxy-2-oxo-4-phosphooxybutanoate + L-glutamate. It participates in amino-acid biosynthesis; L-serine biosynthesis; L-serine from 3-phospho-D-glycerate: step 2/3. The protein operates within cofactor biosynthesis; pyridoxine 5'-phosphate biosynthesis; pyridoxine 5'-phosphate from D-erythrose 4-phosphate: step 3/5. Catalyzes the reversible conversion of 3-phosphohydroxypyruvate to phosphoserine and of 3-hydroxy-2-oxo-4-phosphonooxybutanoate to phosphohydroxythreonine. The protein is Phosphoserine aminotransferase of Xanthomonas axonopodis pv. citri (strain 306).